The following is a 312-amino-acid chain: Metaxin-1 homolog (312 aa).

A helical membrane pass occupies residues 282-302; the sequence is ILFTIGALVLSVAFAIHTGLI.

This sequence belongs to the metaxin family. As to quaternary structure, associates with the mitochondrial contact site and cristae organizing system (MICOS) complex (also known as MINOS or MitOS complex).

Its subcellular location is the mitochondrion outer membrane. Its function is as follows. Involved in transport of proteins into the mitochondrion. Essential for embryonic development. This is Metaxin-1 homolog from Caenorhabditis briggsae.